We begin with the raw amino-acid sequence, 1184 residues long: uncharacterized protein (1184 aa).

2 disordered regions span residues 115–152 (ETSS…AHVS) and 397–426 (TYKP…VPER). 2 stretches are compositionally biased toward polar residues: residues 137–152 (HVMN…AHVS) and 397–421 (TYKP…TSHN). Ser-686 is modified (phosphoserine). 4 stretches are compositionally biased toward basic and acidic residues: residues 705–767 (LSER…ESAH), 783–792 (FEHETEPSHY), 849–863 (SHAH…RDLG), and 891–902 (YLHDEKTRDTLT). Disordered stretches follow at residues 705–870 (LSER…FGDV) and 890–1017 (DYLH…SSPK). A Phosphoserine modification is found at Ser-905. Basic and acidic residues predominate over residues 920-932 (EDHPHASEAERAH). Residues 941-950 (SSESSPESQS) are compositionally biased toward low complexity. A compositionally biased stretch (basic and acidic residues) spans 999-1011 (PRERLDDNAKEIL). Ser-1018 carries the post-translational modification Phosphoserine. Disordered regions lie at residues 1029–1107 (NRKD…IGTQ) and 1135–1154 (DVDN…KSRP). Basic and acidic residues predominate over residues 1032–1045 (DKAAVKRMLEEDSS). Positions 1073–1107 (PAVNNSTKPVAVTSKNGHSRNGSHAAHSNNVIGTQ) are enriched in polar residues. Positions 1138–1150 (NVVSGHSNVNGVS) are enriched in low complexity.

It localises to the cytoplasm. This is an uncharacterized protein from Schizosaccharomyces pombe (strain 972 / ATCC 24843) (Fission yeast).